A 149-amino-acid chain; its full sequence is Large ribosomal subunit protein bL9 (149 aa).

The protein belongs to the bacterial ribosomal protein bL9 family.

In terms of biological role, binds to the 23S rRNA. This Tolumonas auensis (strain DSM 9187 / NBRC 110442 / TA 4) protein is Large ribosomal subunit protein bL9.